A 490-amino-acid chain; its full sequence is Acetyl-coenzyme A carboxylase carboxyl transferase subunit beta, chloroplastic (490 aa).

Residues L184 to L203 are disordered. Residues L221 to K490 enclose the CoA carboxyltransferase N-terminal domain. Residues C225, C228, C244, and C247 each contribute to the Zn(2+) site. The C4-type zinc-finger motif lies at C225–C247.

Belongs to the AccD/PCCB family. In terms of assembly, acetyl-CoA carboxylase is a heterohexamer composed of biotin carboxyl carrier protein, biotin carboxylase and 2 subunits each of ACCase subunit alpha and ACCase plastid-coded subunit beta (accD). Zn(2+) serves as cofactor. In terms of tissue distribution, RNA expressed in leaf, root, stem, and tuber; the least expression occurs in stems. RNA persists even in senescent leaves.

It is found in the plastid. Its subcellular location is the chloroplast stroma. The enzyme catalyses N(6)-carboxybiotinyl-L-lysyl-[protein] + acetyl-CoA = N(6)-biotinyl-L-lysyl-[protein] + malonyl-CoA. It participates in lipid metabolism; malonyl-CoA biosynthesis; malonyl-CoA from acetyl-CoA: step 1/1. In terms of biological role, component of the acetyl coenzyme A carboxylase (ACC) complex. Biotin carboxylase (BC) catalyzes the carboxylation of biotin on its carrier protein (BCCP) and then the CO(2) group is transferred by the transcarboxylase to acetyl-CoA to form malonyl-CoA. This Solanum tuberosum (Potato) protein is Acetyl-coenzyme A carboxylase carboxyl transferase subunit beta, chloroplastic.